A 1237-amino-acid chain; its full sequence is U3 small nucleolar RNA-associated protein 22 (1237 aa).

A disordered region spans residues 1–78; it reads MATSVKRKAS…TNTAATRHNG (78 aa). Phosphoserine occurs at positions 10 and 58. Thr-60 carries the post-translational modification Phosphothreonine. Positions 61–78 are enriched in polar residues; that stretch reads SPESNEVATNTAATRHNG. Ser-64 carries the phosphoserine modification.

Belongs to the NRAP family. Interacts with snoRNA U3. Interacts with MPP10. Component of the ribosomal small subunit (SSU) processome composed of at least 40 protein subunits and snoRNA U3. Interacts with UBP10.

It localises to the nucleus. The protein resides in the nucleolus. In terms of biological role, involved in nucleolar processing of pre-18S ribosomal RNA and ribosome assembly. This Saccharomyces cerevisiae (strain ATCC 204508 / S288c) (Baker's yeast) protein is U3 small nucleolar RNA-associated protein 22 (UTP22).